Here is a 646-residue protein sequence, read N- to C-terminus: Beta-mannosyltransferase 6 (646 aa).

Residues 1–25 (MGNYKPSIKQYVVTVKAIKSSQFGR) are Cytoplasmic-facing. Residues 26–46 (LGICAVVLLFVLGYPFYFISN) form a helical membrane-spanning segment. The Extracellular segment spans residues 47-646 (NPFDTSIRYQ…LTGGWLPSHN (600 aa)). N-linked (GlcNAc...) asparagine glycosylation is found at N62, N81, N103, N117, N127, N132, N146, N334, and N393.

Belongs to the BMT family.

The protein localises to the membrane. Its function is as follows. Beta-mannosyltransferase involved in cell wall biosynthesis. Required for beta-1,2-mannose transfer on phospholipomannan. Required for pro-inflammatory response in macrophages through phospholipomannan-induced TNF-alpha production. This Candida albicans (strain SC5314 / ATCC MYA-2876) (Yeast) protein is Beta-mannosyltransferase 6 (BMT6).